A 644-amino-acid chain; its full sequence is Threonine--tRNA ligase (644 aa).

A TGS domain is found at 1–62; it reads MSFSVTLPDG…DSDVEIAIIT (62 aa). The catalytic stretch occupies residues 240-538; sequence DHRTIGRDLD…LTEIYKGAFP (299 aa). Cys334, His385, and His515 together coordinate Zn(2+).

The protein belongs to the class-II aminoacyl-tRNA synthetase family. Homodimer. The cofactor is Zn(2+).

The protein resides in the cytoplasm. It catalyses the reaction tRNA(Thr) + L-threonine + ATP = L-threonyl-tRNA(Thr) + AMP + diphosphate + H(+). Its function is as follows. Catalyzes the attachment of threonine to tRNA(Thr) in a two-step reaction: L-threonine is first activated by ATP to form Thr-AMP and then transferred to the acceptor end of tRNA(Thr). Also edits incorrectly charged L-seryl-tRNA(Thr). This is Threonine--tRNA ligase from Lactobacillus acidophilus (strain ATCC 700396 / NCK56 / N2 / NCFM).